The chain runs to 201 residues: Urease accessory protein UreG (201 aa).

11–18 (GPVGSGKT) contacts GTP.

The protein belongs to the SIMIBI class G3E GTPase family. UreG subfamily. Homodimer. UreD, UreF and UreG form a complex that acts as a GTP-hydrolysis-dependent molecular chaperone, activating the urease apoprotein by helping to assemble the nickel containing metallocenter of UreC. The UreE protein probably delivers the nickel.

Its subcellular location is the cytoplasm. Facilitates the functional incorporation of the urease nickel metallocenter. This process requires GTP hydrolysis, probably effectuated by UreG. The polypeptide is Urease accessory protein UreG (Synechococcus sp. (strain CC9902)).